The sequence spans 437 residues: Membrane protein NfeD1b (437 aa).

5 helical membrane passes run 2-22, 231-251, 253-273, 288-308, and 316-336; these read LQIK…LLGV, WLTN…GLTV, LFSP…LLFF, LLFI…GGII, and IIAS…SLLI.

The protein belongs to the NfeD family.

The protein resides in the cell membrane. The chain is Membrane protein NfeD1b from Bacillus subtilis (strain 168).